A 1375-amino-acid polypeptide reads, in one-letter code: MGDFRSFRQNGGSSVDFDGIKISLASADKIRSLSYGEVTKPETINYRTFKPEKNGLFCAKIFGPTKSYECLCGKYKKIKYSGVICERCGVEVTSSRVRRERMGHIELASPVAHIWFLKSLPSKICILLDLTLKNVEKVLYFELYIVIDPGVTTFTKNELITDEAYMNAVREYGPDSFTAMIGAEAIRHMLASLDLEKMAVKLRSQAAATNSEVKKKKIIKTLRLVEQFLGSDSRPVDMILDVIPVMPPDLRPLVMLDGGRFATSDLNALYRSVINRNNRLKSLIYLKAPNIIINNERRMLQEAVDALFDNGRRAKVIKGSNKRPYKSISDMLKGKQGRFRQNLLGKRVDYSGRSVIVVGPALELHQCGLPKKIALELFKPFIYSKLELYGIAPTIKTARRMVQNEQPEVWDVLAKVIHQHPVFLNRAPTLHRLSVQAFEPVLIEGKAIQLHPLVCTAFNADFDGDQMSVHVPLSIEAQVEARLLVMSTNNVLNPANSRPIIVPSKDIVLGVYYLSLEEKGGVVHPVTFCATWEAEHAFANGDIGLHTKIRCGIELEDGVKVYTTTFGRLQLLKILPKGVPFESINMVLTVRDISNLVDLVYKTCGHGKTVEFADGIMELGFRYATLSGISFGKDDMVVPPTKSEHVRRANEEVKEYEFQYQEGLITKHEKYNKVVDAWQKCTDLVAKDMMDGISGYESVAEMNSIFMMAQSGARGSAAQIKQLAGMRGLMAKPSGEIIPNPIISNLREGQGVLEYFNSTHGARKGLADTALKTANSGYLTRRLVDVAQDSIIVEEDCGSSNGLVVRATVEGGVVIIPLSDSIFSRVSATDIIDPSDGSVIVRAGEMFDDKSIERIESLGIDSVRIRSVLTCKSKHGICRKCYGADLSNRKLVALGEAVGVIAAQSVGEPGTQLTMRTFHVGGAATRRVENSSMVAFCGGKVKFTNANLITDRDGNYVVLSRSFEILLVDSLGIEHFQGRVQYGGTVYVKEGEVVPIGKKLADWDLYTVPIVAEASGTVSYADMIEGVSYNEVHDESTGILNRMVVDWRQAESSSGLRPRVEILDESGSVAKCQYSKDAVYLLPLGAILNVSNGDVVKAGDVIAKITKESTTTRDITGGLPRVIELFEARKAKVNAVISEIDGYVEFAKDYYKSKRKVIVRSREDKERIYEYLVPKGRHLIVSEGDFIRRGEPLMDGDPDLHEILRVLGLEALAEYMISEIQRVYRLQGVKINNKHIEVIIRKMLQKVEITDAGDTTFLIGEQIDKSRVERINEVMASQGLRCCSYVPVLLGITRASLQTESFISAASFQETTKVLTEAAVAGKVDRLRGLKENIIAGRLLPVGAGYFIDKLKREFTGERQGKQVSVGVGGDLTST.

Cys70, Cys72, Cys85, and Cys88 together coordinate Zn(2+). Asp461, Asp463, and Asp465 together coordinate Mg(2+). Residues Cys797, Cys871, Cys878, and Cys881 each coordinate Zn(2+).

It belongs to the RNA polymerase beta' chain family. As to quaternary structure, the RNAP catalytic core consists of 2 alpha, 1 beta, 1 beta' and 1 omega subunit. When a sigma factor is associated with the core the holoenzyme is formed, which can initiate transcription. Mg(2+) serves as cofactor. Requires Zn(2+) as cofactor.

The enzyme catalyses RNA(n) + a ribonucleoside 5'-triphosphate = RNA(n+1) + diphosphate. In terms of biological role, DNA-dependent RNA polymerase catalyzes the transcription of DNA into RNA using the four ribonucleoside triphosphates as substrates. The protein is DNA-directed RNA polymerase subunit beta' of Neorickettsia sennetsu (strain ATCC VR-367 / Miyayama) (Ehrlichia sennetsu).